Reading from the N-terminus, the 442-residue chain is tRNA-2-methylthio-N(6)-dimethylallyladenosine synthase (442 aa).

One can recognise an MTTase N-terminal domain in the interval K2 to T120. Residues C11, C49, C83, C157, C161, and C164 each contribute to the [4Fe-4S] cluster site. Residues R143–R375 enclose the Radical SAM core domain. In terms of domain architecture, TRAM spans Q378 to E441.

This sequence belongs to the methylthiotransferase family. MiaB subfamily. Monomer. Requires [4Fe-4S] cluster as cofactor.

The protein resides in the cytoplasm. It carries out the reaction N(6)-dimethylallyladenosine(37) in tRNA + (sulfur carrier)-SH + AH2 + 2 S-adenosyl-L-methionine = 2-methylsulfanyl-N(6)-dimethylallyladenosine(37) in tRNA + (sulfur carrier)-H + 5'-deoxyadenosine + L-methionine + A + S-adenosyl-L-homocysteine + 2 H(+). Its function is as follows. Catalyzes the methylthiolation of N6-(dimethylallyl)adenosine (i(6)A), leading to the formation of 2-methylthio-N6-(dimethylallyl)adenosine (ms(2)i(6)A) at position 37 in tRNAs that read codons beginning with uridine. The sequence is that of tRNA-2-methylthio-N(6)-dimethylallyladenosine synthase from Neisseria gonorrhoeae (strain ATCC 700825 / FA 1090).